The primary structure comprises 244 residues: Phosphoadenosine 5'-phosphosulfate reductase (244 aa).

Cysteine 239 (nucleophile; cysteine thiosulfonate intermediate) is an active-site residue.

The protein belongs to the PAPS reductase family. CysH subfamily.

It is found in the cytoplasm. The enzyme catalyses [thioredoxin]-disulfide + sulfite + adenosine 3',5'-bisphosphate + 2 H(+) = [thioredoxin]-dithiol + 3'-phosphoadenylyl sulfate. Its pathway is sulfur metabolism; hydrogen sulfide biosynthesis; sulfite from sulfate: step 3/3. Functionally, catalyzes the formation of sulfite from phosphoadenosine 5'-phosphosulfate (PAPS) using thioredoxin as an electron donor. The sequence is that of Phosphoadenosine 5'-phosphosulfate reductase from Salmonella choleraesuis (strain SC-B67).